The primary structure comprises 418 residues: MKLDKSRKLYAEALNLMPGGVSSPVRAFKPHPFYTARGKGSKIYDVDGNAYIDYCMAYGPLVLGHANEVVKNALAEQLERGWLYGTPIELEIEYAKLIQKYFPSMEMLRFVNTGSEATMAALRVARGFTGRDKIVKVEGSFHGAHDAVLVKAGSGATTHGIPNSAGVPADFVKNTLQVPFNDIEALSEILEKNEVAALILEPVMGNSSLILPEKDYLKEVRKVTAENDVLLIFDEVITGFRVSMGGAQEYYGVKPDLTTLGKIAGGGLPIGIFGGRKEIMERVAPSGDVYQAGTFSGNPLSLTAGYATVKFMEENGVIEKVNSLTEKLVSGIADVLEDKKAECEVGSLASMFCIYFGPTPRNYAEALQLNKERFMEFFWRMLENGVFLPPSQYETCFVSFAHTEEDVEKTVEAVSESL.

Position 262 is an N6-(pyridoxal phosphate)lysine (Lys262).

The protein belongs to the class-III pyridoxal-phosphate-dependent aminotransferase family. HemL subfamily. Pyridoxal 5'-phosphate serves as cofactor.

It localises to the cytoplasm. It carries out the reaction (S)-4-amino-5-oxopentanoate = 5-aminolevulinate. Its pathway is porphyrin-containing compound metabolism; protoporphyrin-IX biosynthesis; 5-aminolevulinate from L-glutamyl-tRNA(Glu): step 2/2. The protein is Glutamate-1-semialdehyde 2,1-aminomutase (hemL) of Archaeoglobus fulgidus (strain ATCC 49558 / DSM 4304 / JCM 9628 / NBRC 100126 / VC-16).